The following is a 130-amino-acid chain: Transcription antitermination protein NusB (130 aa).

Belongs to the NusB family.

Its function is as follows. Involved in transcription antitermination. Required for transcription of ribosomal RNA (rRNA) genes. Binds specifically to the boxA antiterminator sequence of the ribosomal RNA (rrn) operons. This is Transcription antitermination protein NusB from Bacillus anthracis (strain A0248).